A 500-amino-acid chain; its full sequence is Trehalose-6-phosphate synthase (500 aa).

Residue R28 participates in D-glucose 6-phosphate binding. G48–G49 contributes to the UDP-alpha-D-glucose binding site. Y104 and D158 together coordinate D-glucose 6-phosphate. UDP-alpha-D-glucose is bound by residues R300 and K305. R338 provides a ligand contact to D-glucose 6-phosphate. Residue L403–E407 coordinates UDP-alpha-D-glucose.

The protein belongs to the glycosyltransferase 20 family. In terms of assembly, homotetramer.

It catalyses the reaction ADP-alpha-D-glucose + D-glucose 6-phosphate = alpha,alpha-trehalose 6-phosphate + ADP + H(+). The enzyme catalyses CDP-alpha-D-glucose + D-glucose 6-phosphate = alpha,alpha-trehalose 6-phosphate + CDP + H(+). The catalysed reaction is GDP-alpha-D-glucose + D-glucose 6-phosphate = alpha,alpha-trehalose 6-phosphate + GDP + H(+). It carries out the reaction TDP-alpha-D-glucose + D-glucose 6-phosphate = 5-methyl-UDP + alpha,alpha-trehalose 6-phosphate + H(+). It catalyses the reaction D-glucose 6-phosphate + UDP-alpha-D-glucose = alpha,alpha-trehalose 6-phosphate + UDP + H(+). It functions in the pathway glycan biosynthesis; trehalose biosynthesis. Its function is as follows. Probably involved in the osmoprotection via the biosynthesis of trehalose and in the production of glycogen and alpha-glucan via the TreS-Pep2 branch involved in the biosynthesis of maltose-1-phosphate (M1P). Catalyzes the transfer of glucose from UDP-glucose (UDP-Glc) to D-glucose 6-phosphate (Glc-6-P) to form trehalose-6-phosphate. Probably also able to use ADP-Glc, CDP-Glc, GDP-Glc and TDP-Glc as glucosyl donors. The sequence is that of Trehalose-6-phosphate synthase from Mycobacterium ulcerans (strain Agy99).